We begin with the raw amino-acid sequence, 266 residues long: 2-C-methyl-D-erythritol 4-phosphate cytidylyltransferase (266 aa).

The tract at residues 229–266 (NRDCGPGTRDPESAHPQSSVSASAFSGPGSRAPGPEEI) is disordered. Residues 243–252 (HPQSSVSASA) show a composition bias toward polar residues.

It belongs to the IspD/TarI cytidylyltransferase family. IspD subfamily.

The enzyme catalyses 2-C-methyl-D-erythritol 4-phosphate + CTP + H(+) = 4-CDP-2-C-methyl-D-erythritol + diphosphate. It functions in the pathway isoprenoid biosynthesis; isopentenyl diphosphate biosynthesis via DXP pathway; isopentenyl diphosphate from 1-deoxy-D-xylulose 5-phosphate: step 2/6. In terms of biological role, catalyzes the formation of 4-diphosphocytidyl-2-C-methyl-D-erythritol from CTP and 2-C-methyl-D-erythritol 4-phosphate (MEP). The chain is 2-C-methyl-D-erythritol 4-phosphate cytidylyltransferase from Xanthomonas axonopodis pv. citri (strain 306).